The sequence spans 175 residues: Crossover junction endodeoxyribonuclease RuvC (175 aa).

Active-site residues include D16, E76, and D148. Mg(2+) contacts are provided by D16, E76, and D148.

This sequence belongs to the RuvC family. As to quaternary structure, homodimer which binds Holliday junction (HJ) DNA. The HJ becomes 2-fold symmetrical on binding to RuvC with unstacked arms; it has a different conformation from HJ DNA in complex with RuvA. In the full resolvosome a probable DNA-RuvA(4)-RuvB(12)-RuvC(2) complex forms which resolves the HJ. Mg(2+) is required as a cofactor.

It localises to the cytoplasm. The catalysed reaction is Endonucleolytic cleavage at a junction such as a reciprocal single-stranded crossover between two homologous DNA duplexes (Holliday junction).. Functionally, the RuvA-RuvB-RuvC complex processes Holliday junction (HJ) DNA during genetic recombination and DNA repair. Endonuclease that resolves HJ intermediates. Cleaves cruciform DNA by making single-stranded nicks across the HJ at symmetrical positions within the homologous arms, yielding a 5'-phosphate and a 3'-hydroxyl group; requires a central core of homology in the junction. The consensus cleavage sequence is 5'-(A/T)TT(C/G)-3'. Cleavage occurs on the 3'-side of the TT dinucleotide at the point of strand exchange. HJ branch migration catalyzed by RuvA-RuvB allows RuvC to scan DNA until it finds its consensus sequence, where it cleaves and resolves the cruciform DNA. The sequence is that of Crossover junction endodeoxyribonuclease RuvC from Bradyrhizobium diazoefficiens (strain JCM 10833 / BCRC 13528 / IAM 13628 / NBRC 14792 / USDA 110).